The primary structure comprises 578 residues: Septation ring formation regulator EzrA (578 aa).

The Extracellular portion of the chain corresponds to 1-8 (MKNNWIII). The helical transmembrane segment at 9 to 27 (LVLVIVIIAAVLYLIGYFM) threads the bilayer. At 28 to 578 (RKKNQEQLDE…NINNPNLTAI (551 aa)) the chain is on the cytoplasmic side. Coiled-coil stretches lie at residues 103 to 165 (RFMK…DDKA), 256 to 285 (QNFA…AAVE), and 394 to 490 (KILD…DDLE).

It belongs to the EzrA family.

Its subcellular location is the cell membrane. Its function is as follows. Negative regulator of FtsZ ring formation; modulates the frequency and position of FtsZ ring formation. Inhibits FtsZ ring formation at polar sites. Interacts either with FtsZ or with one of its binding partners to promote depolymerization. The polypeptide is Septation ring formation regulator EzrA (Enterococcus faecalis (strain ATCC 700802 / V583)).